A 165-amino-acid chain; its full sequence is Nucleotide-binding protein Syncc9605_0652 (165 aa).

Belongs to the YajQ family.

Nucleotide-binding protein. This chain is Nucleotide-binding protein Syncc9605_0652, found in Synechococcus sp. (strain CC9605).